We begin with the raw amino-acid sequence, 258 residues long: Ubiquinone/menaquinone biosynthesis C-methyltransferase UbiE (258 aa).

S-adenosyl-L-methionine contacts are provided by residues threonine 81, aspartate 102, and 130–131 (NA).

It belongs to the class I-like SAM-binding methyltransferase superfamily. MenG/UbiE family.

The catalysed reaction is a 2-demethylmenaquinol + S-adenosyl-L-methionine = a menaquinol + S-adenosyl-L-homocysteine + H(+). It catalyses the reaction a 2-methoxy-6-(all-trans-polyprenyl)benzene-1,4-diol + S-adenosyl-L-methionine = a 5-methoxy-2-methyl-3-(all-trans-polyprenyl)benzene-1,4-diol + S-adenosyl-L-homocysteine + H(+). The protein operates within quinol/quinone metabolism; menaquinone biosynthesis; menaquinol from 1,4-dihydroxy-2-naphthoate: step 2/2. Its pathway is cofactor biosynthesis; ubiquinone biosynthesis. In terms of biological role, methyltransferase required for the conversion of demethylmenaquinol (DMKH2) to menaquinol (MKH2) and the conversion of 2-polyprenyl-6-methoxy-1,4-benzoquinol (DDMQH2) to 2-polyprenyl-3-methyl-6-methoxy-1,4-benzoquinol (DMQH2). This chain is Ubiquinone/menaquinone biosynthesis C-methyltransferase UbiE, found in Rhizobium rhizogenes (strain K84 / ATCC BAA-868) (Agrobacterium radiobacter).